The sequence spans 236 residues: MAKRSKAYRAAAEKIEAGKFYAPAEAVALAKELAEGSKSDPTVEVAMRLGVDPRKADQMVRGTVNLPNGTGKTARVVVFATGDKAAAAEAAGADFVGNDDLIARIQGGWTDFDAAVATPDMMGKVGRLGKILGPRNLMPNPKTGTVTMDVAKAVNDIKGGKIDFRVDKHSNLHFIIGKASFDAQKLAENYGAALEEVLRLKPSASKGRYITKATVATTFGPGIPVDPNATEVTTQA.

This sequence belongs to the universal ribosomal protein uL1 family. Part of the 50S ribosomal subunit.

Its function is as follows. Binds directly to 23S rRNA. The L1 stalk is quite mobile in the ribosome, and is involved in E site tRNA release. Functionally, protein L1 is also a translational repressor protein, it controls the translation of the L11 operon by binding to its mRNA. This is Large ribosomal subunit protein uL1 from Kocuria rhizophila (strain ATCC 9341 / DSM 348 / NBRC 103217 / DC2201).